Reading from the N-terminus, the 615-residue chain is Leucine aminopeptidase 2 (615 aa).

A peptide is bound by residues 139–141 and 271–276; these read QCQ and PYGGME. Residue His300 coordinates Zn(2+). Glu301 functions as the Proton acceptor in the catalytic mechanism. Positions 304 and 323 each coordinate Zn(2+). The active-site Proton donor is the Tyr386.

It belongs to the peptidase M1 family. Requires Zn(2+) as cofactor.

It is found in the cytoplasm. The protein localises to the nucleus. The enzyme catalyses an epoxide + H2O = an ethanediol. Functionally, aminopeptidase that preferentially cleaves di- and tripeptides. Also has low epoxide hydrolase activity (in vitro). Can hydrolyze the epoxide leukotriene LTA(4) but it forms preferentially 5,6-dihydroxy-7,9,11,14-eicosatetraenoic acid rather than the cytokine leukotriene B(4) as the product compared to the homologous mammalian enzyme (in vitro). This chain is Leucine aminopeptidase 2, found in Aspergillus oryzae (strain ATCC 42149 / RIB 40) (Yellow koji mold).